The primary structure comprises 793 residues: Serine/threonine-protein phosphatase 1 regulatory subunit GAC1 (793 aa).

Residues 1 to 10 (MVIQTATTLS) are compositionally biased toward polar residues. The segment at 1 to 20 (MVIQTATTLSPAKARPSFPH) is disordered. The region spanning 235–360 (TKYLNGQNVK…NNNGKNYHLF (126 aa)) is the CBM21 domain. A phosphoserine mark is found at Ser-415 and Ser-424. Disordered stretches follow at residues 450–491 (LENA…SIDL) and 616–671 (TTMD…LNDH). Positions 623–633 (KTSTINNSTDT) are enriched in polar residues. A compositionally biased stretch (basic and acidic residues) spans 637–648 (PSKENGTVKENK). The segment covering 649–665 (SSANSTSAPSSSQNRAS) has biased composition (low complexity).

Its function is as follows. Regulates the activity of glycogen synthase. It is most probably a regulatory subunit for protein phosphatase type 1. The chain is Serine/threonine-protein phosphatase 1 regulatory subunit GAC1 (GAC1) from Saccharomyces cerevisiae (strain ATCC 204508 / S288c) (Baker's yeast).